The following is a 551-amino-acid chain: Chaperonin GroEL (551 aa).

ATP contacts are provided by residues 29-32, lysine 50, 86-90, glycine 417, and aspartate 499; these read TAGP and DGTTT.

Belongs to the chaperonin (HSP60) family. As to quaternary structure, forms a cylinder of 14 subunits composed of two heptameric rings stacked back-to-back. Interacts with the co-chaperonin GroES.

It is found in the cytoplasm. It carries out the reaction ATP + H2O + a folded polypeptide = ADP + phosphate + an unfolded polypeptide.. Its function is as follows. Together with its co-chaperonin GroES, plays an essential role in assisting protein folding. The GroEL-GroES system forms a nano-cage that allows encapsulation of the non-native substrate proteins and provides a physical environment optimized to promote and accelerate protein folding. This chain is Chaperonin GroEL, found in Ehrlichia ruminantium (strain Gardel).